We begin with the raw amino-acid sequence, 353 residues long: Melanin-concentrating hormone receptor 1 (353 aa).

The Extracellular segment spans residues 1-45; that stretch reads MDLQASLLSTGPNASNISDGQDNFTLAGPPPRTRSVSYINIIMPS. N-linked (GlcNAc...) asparagine glycosylation is found at Asn-13, Asn-16, and Asn-23. Residues 46 to 66 traverse the membrane as a helical segment; sequence VFGTICLLGIVGNSTVIFAVV. Residues 67–79 are Cytoplasmic-facing; that stretch reads KKSKLHWCSNVPD. Residues 80 to 100 traverse the membrane as a helical segment; sequence IFIINLSVVDLLFLLGMPFMI. The Extracellular portion of the chain corresponds to 101-116; it reads HQLMGNGVWHFGETMC. A disulfide bond links Cys-116 and Cys-194. A helical transmembrane segment spans residues 117-139; sequence TLITAMDANSQFTSTYILTAMAI. At 140-161 the chain is on the cytoplasmic side; it reads DRYLATVHPISSTKFRKPSMAT. Residues 162–182 form a helical membrane-spanning segment; that stretch reads LVICLLWALSFISITPVWLYA. Residues 183–204 lie on the Extracellular side of the membrane; sequence RLIPFPGGAVGCGIRLPNPDTD. The helical transmembrane segment at 205-225 threads the bilayer; sequence LYWFTLYQFFLAFALPFVVIT. Residues 226-256 lie on the Cytoplasmic side of the membrane; it reads AAYVKILQRMTSSVAPASQRSIRLRTKRVTR. The helical transmembrane segment at 257 to 277 threads the bilayer; it reads TAIAICLVFFVCWAPYYVLQL. The Extracellular portion of the chain corresponds to 278–294; sequence TQLSISRPTLTFVYLYN. A helical membrane pass occupies residues 295-315; it reads AAISLGYANSCLNPFVYIVLC. The Cytoplasmic portion of the chain corresponds to 316 to 353; that stretch reads ETFRKRLVLSVKPAAQGQLRTVSNAQTADEERTESKGT.

Belongs to the G-protein coupled receptor 1 family. As to quaternary structure, interacts with NCDN. Expressed predominantly in the brain. Expression in brain is negatively regulated by leptin. Also found in the epithelium of the tongue and kidney.

Its subcellular location is the cell membrane. Functionally, receptor for melanin-concentrating hormone, coupled to both G proteins that inhibit adenylyl cyclase and G proteins that activate phosphoinositide hydrolysis. This Mus musculus (Mouse) protein is Melanin-concentrating hormone receptor 1.